The following is a 247-amino-acid chain: Segregation and condensation protein A (247 aa).

It belongs to the ScpA family. Component of a cohesin-like complex composed of ScpA, ScpB and the Smc homodimer, in which ScpA and ScpB bind to the head domain of Smc. The presence of the three proteins is required for the association of the complex with DNA.

The protein resides in the cytoplasm. Its function is as follows. Participates in chromosomal partition during cell division. May act via the formation of a condensin-like complex containing Smc and ScpB that pull DNA away from mid-cell into both cell halves. This is Segregation and condensation protein A from Bacillus cereus (strain AH187).